The following is a 211-amino-acid chain: N-(5'-phosphoribosyl)anthranilate isomerase (211 aa).

It belongs to the TrpF family.

The enzyme catalyses N-(5-phospho-beta-D-ribosyl)anthranilate = 1-(2-carboxyphenylamino)-1-deoxy-D-ribulose 5-phosphate. It functions in the pathway amino-acid biosynthesis; L-tryptophan biosynthesis; L-tryptophan from chorismate: step 3/5. The sequence is that of N-(5'-phosphoribosyl)anthranilate isomerase from Zymomonas mobilis subsp. pomaceae (strain ATCC 29192 / DSM 22645 / JCM 10191 / CCUG 17912 / NBRC 13757 / NCIMB 11200 / NRRL B-4491 / Barker I).